We begin with the raw amino-acid sequence, 525 residues long: FNIP repeat-containing protein DDB_G0274617 (525 aa).

An FNIP repeat occupies 65-107; that stretch reads YQHEIKKEMLPSSIISIIFYNIKNILSSDSIPDTVKFLGFNGY.

This chain is FNIP repeat-containing protein DDB_G0274617, found in Dictyostelium discoideum (Social amoeba).